The chain runs to 240 residues: Triosephosphate isomerase (240 aa).

9-11 (NWK) contacts substrate. Residue H94 is the Electrophile of the active site. Catalysis depends on E163, which acts as the Proton acceptor. Substrate-binding positions include G169, S202, and 223-224 (GG).

Belongs to the triosephosphate isomerase family. Homodimer.

The protein resides in the cytoplasm. The catalysed reaction is D-glyceraldehyde 3-phosphate = dihydroxyacetone phosphate. The protein operates within carbohydrate biosynthesis; gluconeogenesis. Its pathway is carbohydrate degradation; glycolysis; D-glyceraldehyde 3-phosphate from glycerone phosphate: step 1/1. In terms of biological role, involved in the gluconeogenesis. Catalyzes stereospecifically the conversion of dihydroxyacetone phosphate (DHAP) to D-glyceraldehyde-3-phosphate (G3P). The sequence is that of Triosephosphate isomerase from Gloeobacter violaceus (strain ATCC 29082 / PCC 7421).